Consider the following 153-residue polypeptide: 6,7-dimethyl-8-ribityllumazine synthase (153 aa).

5-amino-6-(D-ribitylamino)uracil contacts are provided by residues Phe-22, 56–58, and 80–82; these read AFE and TVI. 85 to 86 lines the (2S)-2-hydroxy-3-oxobutyl phosphate pocket; sequence AT. Residue His-88 is the Proton donor of the active site. 5-amino-6-(D-ribitylamino)uracil is bound at residue Phe-113. Arg-127 provides a ligand contact to (2S)-2-hydroxy-3-oxobutyl phosphate.

The protein belongs to the DMRL synthase family.

The enzyme catalyses (2S)-2-hydroxy-3-oxobutyl phosphate + 5-amino-6-(D-ribitylamino)uracil = 6,7-dimethyl-8-(1-D-ribityl)lumazine + phosphate + 2 H2O + H(+). Its pathway is cofactor biosynthesis; riboflavin biosynthesis; riboflavin from 2-hydroxy-3-oxobutyl phosphate and 5-amino-6-(D-ribitylamino)uracil: step 1/2. Its function is as follows. Catalyzes the formation of 6,7-dimethyl-8-ribityllumazine by condensation of 5-amino-6-(D-ribitylamino)uracil with 3,4-dihydroxy-2-butanone 4-phosphate. This is the penultimate step in the biosynthesis of riboflavin. The sequence is that of 6,7-dimethyl-8-ribityllumazine synthase from Clostridium perfringens (strain ATCC 13124 / DSM 756 / JCM 1290 / NCIMB 6125 / NCTC 8237 / Type A).